The sequence spans 338 residues: Nicotinate-nucleotide--dimethylbenzimidazole phosphoribosyltransferase (338 aa).

Glu306 serves as the catalytic Proton acceptor.

The protein belongs to the CobT family.

It carries out the reaction 5,6-dimethylbenzimidazole + nicotinate beta-D-ribonucleotide = alpha-ribazole 5'-phosphate + nicotinate + H(+). It participates in nucleoside biosynthesis; alpha-ribazole biosynthesis; alpha-ribazole from 5,6-dimethylbenzimidazole: step 1/2. In terms of biological role, catalyzes the synthesis of alpha-ribazole-5'-phosphate from nicotinate mononucleotide (NAMN) and 5,6-dimethylbenzimidazole (DMB). In Cereibacter sphaeroides (strain ATCC 17025 / ATH 2.4.3) (Rhodobacter sphaeroides), this protein is Nicotinate-nucleotide--dimethylbenzimidazole phosphoribosyltransferase.